The following is a 600-amino-acid chain: NADH-quinone oxidoreductase subunit C/D (600 aa).

The segment at 1 to 190 (MVNNMTDLTA…SPFELTKAKQ (190 aa)) is NADH dehydrogenase I subunit C. An NADH dehydrogenase I subunit D region spans residues 214 to 600 (DFMFLNLGPN…IDFVMSDVDR (387 aa)).

This sequence in the N-terminal section; belongs to the complex I 30 kDa subunit family. The protein in the C-terminal section; belongs to the complex I 49 kDa subunit family. In terms of assembly, NDH-1 is composed of 13 different subunits. Subunits NuoB, CD, E, F, and G constitute the peripheral sector of the complex.

The protein localises to the cell inner membrane. The catalysed reaction is a quinone + NADH + 5 H(+)(in) = a quinol + NAD(+) + 4 H(+)(out). Functionally, NDH-1 shuttles electrons from NADH, via FMN and iron-sulfur (Fe-S) centers, to quinones in the respiratory chain. The immediate electron acceptor for the enzyme in this species is believed to be ubiquinone. Couples the redox reaction to proton translocation (for every two electrons transferred, four hydrogen ions are translocated across the cytoplasmic membrane), and thus conserves the redox energy in a proton gradient. This chain is NADH-quinone oxidoreductase subunit C/D, found in Escherichia coli (strain ATCC 8739 / DSM 1576 / NBRC 3972 / NCIMB 8545 / WDCM 00012 / Crooks).